Here is a 100-residue protein sequence, read N- to C-terminus: NADH-quinone oxidoreductase subunit K (100 aa).

The next 3 membrane-spanning stretches (helical) occupy residues 1–21 (MIGLNHYLIVSGLLFCIGLAG), 28–48 (ILLLFFSTEIMLNAINIGFVA), and 64–84 (FIIAIAASEVAIGLGLVILWF).

It belongs to the complex I subunit 4L family. As to quaternary structure, NDH-1 is composed of 14 different subunits. Subunits NuoA, H, J, K, L, M, N constitute the membrane sector of the complex.

The protein resides in the cell inner membrane. It carries out the reaction a quinone + NADH + 5 H(+)(in) = a quinol + NAD(+) + 4 H(+)(out). Functionally, NDH-1 shuttles electrons from NADH, via FMN and iron-sulfur (Fe-S) centers, to quinones in the respiratory chain. The immediate electron acceptor for the enzyme in this species is believed to be ubiquinone. Couples the redox reaction to proton translocation (for every two electrons transferred, four hydrogen ions are translocated across the cytoplasmic membrane), and thus conserves the redox energy in a proton gradient. The protein is NADH-quinone oxidoreductase subunit K of Helicobacter pylori (strain Shi470).